The chain runs to 160 residues: Cyclic pyranopterin monophosphate synthase (160 aa).

Residues methionine 77 to histidine 79 and methionine 114 to glutamate 115 each bind substrate. The active site involves aspartate 129.

It belongs to the MoaC family. Homohexamer; trimer of dimers.

The catalysed reaction is (8S)-3',8-cyclo-7,8-dihydroguanosine 5'-triphosphate = cyclic pyranopterin phosphate + diphosphate. Its pathway is cofactor biosynthesis; molybdopterin biosynthesis. In terms of biological role, catalyzes the conversion of (8S)-3',8-cyclo-7,8-dihydroguanosine 5'-triphosphate to cyclic pyranopterin monophosphate (cPMP). This Listeria monocytogenes serovar 1/2a (strain ATCC BAA-679 / EGD-e) protein is Cyclic pyranopterin monophosphate synthase.